A 480-amino-acid polypeptide reads, in one-letter code: Ammonium transporter 2 member 4 (480 aa).

Topologically, residues 1 to 27 (MELPSNLLPDEASPEWMNKGDNAWQLT) are extracellular. Residues 28-48 (AATMVGLQSIPGLVILYGSLV) traverse the membrane as a helical segment. The Cytoplasmic segment spans residues 49-51 (KKT). Residues 52–72 (WAINSAFMAFYAFASVLLCWV) traverse the membrane as a helical segment. Residues 73–113 (SWAYQMSFGEKMVFFLGKPNVALDEKFLLGKAFLGNFPNAT) lie on the Extracellular side of the membrane. Residue Asn-111 is glycosylated (N-linked (GlcNAc...) asparagine). The helical transmembrane segment at 114 to 134 (MVFYQGVFAGLTLILIAGALL) threads the bilayer. Residues 135-141 (GRMNIRA) lie on the Cytoplasmic side of the membrane. A helical transmembrane segment spans residues 142 to 162 (WMLFVPLWVTFSYTVVAFSIW). Residues 163–175 (CPDGWLAKRGVID) are Extracellular-facing. The helical transmembrane segment at 176-196 (FAGGYVIHLSAGVAGFTAAYW) threads the bilayer. The Cytoplasmic segment spans residues 197-214 (VGPRADKDRETFPAATNN). The helical transmembrane segment at 215–235 (MIMVLAGAGLLWMGWSGFNGG) threads the bilayer. The Extracellular portion of the chain corresponds to 236-242 (APFVAST). A helical transmembrane segment spans residues 243–263 (IASLAILNTHVCTAASITVWV). Residues 264 to 274 (MLDTFYFGKPT) lie on the Cytoplasmic side of the membrane. The helical transmembrane segment at 275 to 295 (VFGAVQGMITGLVCITPAAGV) threads the bilayer. Residues 296–298 (VQG) lie on the Extracellular side of the membrane. Residues 299–319 (WAAILMGFISGSIPWYTMMVL) form a helical membrane-spanning segment. Over 320-334 (HNKVNFLKKIDDPMA) the chain is Cytoplasmic. The chain crosses the membrane as a helical span at residues 335 to 355 (VFHTHAIAGALGGILTGFFAV). The Extracellular segment spans residues 356–394 (PKLCRLFYMVPDWEKYIGLAYGLQNKGATQAGLKQMVIQ). A helical transmembrane segment spans residues 395–415 (IEAIVFVICYNVLMTSLICLI). The Cytoplasmic segment spans residues 416–480 (VRVIVPLRLN…SRSLGELQMV (65 aa)).

The protein belongs to the ammonia transporter channel (TC 1.A.11.2) family.

The protein resides in the cell membrane. In terms of biological role, involved in ammonium transport. May be involved in arbuscular mycorrhizal (AM) symbiosis with AM fungi. The sequence is that of Ammonium transporter 2 member 4 from Medicago truncatula (Barrel medic).